A 311-amino-acid chain; its full sequence is Avirulence protein ATR1 (311 aa).

The signal sequence occupies residues 1–15 (MRVCYFVLVPSVALA). Positions 48-62 (RALRAQTALDDDEER) match the RxLR-dEER motif. 2 WY domain regions span residues 127 to 209 (DEAL…VKCV) and 210 to 311 (ESED…IYSV).

Belongs to the RxLR effector family. As to quaternary structure, monomer. Interacts with defense protein RPP1 from several ecotypes including RPP1-NdA, RPP1-WsB, RPP1-EstA and RPP1-ZdrA, via their leucine-rich repeats (LLRs).

The protein localises to the secreted. The protein resides in the host cytoplasm. Secreted effector that acts as an elicitor of hypersensitive response (HR) specifically on plants carrying both defense protein RPP1 from several ecotypes including RPP1-NdA, RPP1-WsB, RPP1-EstA and RPP1-ZdrA. The polypeptide is Avirulence protein ATR1 (Hyaloperonospora arabidopsidis (strain Emoy2) (Downy mildew agent)).